A 460-amino-acid chain; its full sequence is tRNA modification GTPase MnmE (460 aa).

Residues R29, E91, and K132 each contribute to the (6S)-5-formyl-5,6,7,8-tetrahydrofolate site. The TrmE-type G domain occupies 227 to 383 (GISIALIGKT…LIDTIIKKCG (157 aa)). N237 contacts K(+). GTP-binding positions include 237–242 (NVGKSS), 256–262 (TNIPGTT), and 281–284 (DTAG). S241 provides a ligand contact to Mg(2+). The K(+) site is built by T256, I258, and T261. T262 is a binding site for Mg(2+). A (6S)-5-formyl-5,6,7,8-tetrahydrofolate-binding site is contributed by K460.

This sequence belongs to the TRAFAC class TrmE-Era-EngA-EngB-Septin-like GTPase superfamily. TrmE GTPase family. As to quaternary structure, homodimer. Heterotetramer of two MnmE and two MnmG subunits. K(+) is required as a cofactor.

It is found in the cytoplasm. In terms of biological role, exhibits a very high intrinsic GTPase hydrolysis rate. Involved in the addition of a carboxymethylaminomethyl (cmnm) group at the wobble position (U34) of certain tRNAs, forming tRNA-cmnm(5)s(2)U34. The polypeptide is tRNA modification GTPase MnmE (Prochlorococcus marinus (strain MIT 9215)).